Reading from the N-terminus, the 313-residue chain is MNIILAKPRGFCAGVKRALLIVENALKIYKKTIYVQHELVHNQYVIETLRQKGVVFVEDISDIPNNSIVVFSAHGVSKKIKKKAIKKNLTILNATCPLVTKVHLEVSKSSKNGIETILIGHRGHPEVIGTIGQYDNKKGKIHLIEDIEDVNQLTIKIDKKLNFFTQTTLSIKNTQSIILALKKKFLNISGPKKEDICYATTNRQNAIIKLSKITDIILVIGSKNSSNSSRLSELGKETGVFTKQIESFSDIKEEWLKNKKNIGITAGASAPDILVEEVIKHLKKLGFKNPPKEMLGDEEKTIFKIPKNLNVQN.

Cys-12 lines the [4Fe-4S] cluster pocket. (2E)-4-hydroxy-3-methylbut-2-enyl diphosphate contacts are provided by His-41 and His-74. Residues His-41 and His-74 each coordinate dimethylallyl diphosphate. Positions 41 and 74 each coordinate isopentenyl diphosphate. Residue Cys-96 coordinates [4Fe-4S] cluster. His-124 is a binding site for (2E)-4-hydroxy-3-methylbut-2-enyl diphosphate. His-124 is a binding site for dimethylallyl diphosphate. His-124 contributes to the isopentenyl diphosphate binding site. Residue Glu-126 is the Proton donor of the active site. Thr-167 is a (2E)-4-hydroxy-3-methylbut-2-enyl diphosphate binding site. [4Fe-4S] cluster is bound at residue Cys-197. Positions 225, 226, 227, and 269 each coordinate (2E)-4-hydroxy-3-methylbut-2-enyl diphosphate. Residues Ser-225, Ser-226, Asn-227, and Ser-269 each contribute to the dimethylallyl diphosphate site. The isopentenyl diphosphate site is built by Ser-225, Ser-226, Asn-227, and Ser-269.

This sequence belongs to the IspH family. In terms of assembly, homodimer. It depends on [4Fe-4S] cluster as a cofactor.

It carries out the reaction isopentenyl diphosphate + 2 oxidized [2Fe-2S]-[ferredoxin] + H2O = (2E)-4-hydroxy-3-methylbut-2-enyl diphosphate + 2 reduced [2Fe-2S]-[ferredoxin] + 2 H(+). The enzyme catalyses dimethylallyl diphosphate + 2 oxidized [2Fe-2S]-[ferredoxin] + H2O = (2E)-4-hydroxy-3-methylbut-2-enyl diphosphate + 2 reduced [2Fe-2S]-[ferredoxin] + 2 H(+). Its pathway is isoprenoid biosynthesis; dimethylallyl diphosphate biosynthesis; dimethylallyl diphosphate from (2E)-4-hydroxy-3-methylbutenyl diphosphate: step 1/1. The protein operates within isoprenoid biosynthesis; isopentenyl diphosphate biosynthesis via DXP pathway; isopentenyl diphosphate from 1-deoxy-D-xylulose 5-phosphate: step 6/6. Its function is as follows. Catalyzes the conversion of 1-hydroxy-2-methyl-2-(E)-butenyl 4-diphosphate (HMBPP) into a mixture of isopentenyl diphosphate (IPP) and dimethylallyl diphosphate (DMAPP). Acts in the terminal step of the DOXP/MEP pathway for isoprenoid precursor biosynthesis. This chain is 4-hydroxy-3-methylbut-2-enyl diphosphate reductase, found in Buchnera aphidicola subsp. Schizaphis graminum (strain Sg).